Consider the following 160-residue polypeptide: Putative antiporter subunit mnhE2 (160 aa).

The next 3 helical transmembrane spans lie at 22-42, 61-81, and 102-122; these read SFQF…IYIL, FLGV…NYIL, and WAIT…VIRI.

It belongs to the CPA3 antiporters (TC 2.A.63) subunit E family. In terms of assembly, may form a heterooligomeric complex that consists of seven subunits: mnhA2, mnhB2, mnhC2, mnhD2, mnhE2, mnhF2 and mnhG2.

The protein resides in the cell membrane. The protein is Putative antiporter subunit mnhE2 (mnhE2) of Staphylococcus haemolyticus (strain JCSC1435).